A 733-amino-acid chain; its full sequence is Polyribonucleotide nucleotidyltransferase (733 aa).

The Mg(2+) site is built by D488 and D494. The region spanning P555–I614 is the KH domain. Residues G624–K692 form the S1 motif domain. A disordered region spans residues T698–D733. Residues I702–K721 show a composition bias toward basic and acidic residues. Residues S722 to D733 are compositionally biased toward basic residues.

The protein belongs to the polyribonucleotide nucleotidyltransferase family. The cofactor is Mg(2+).

It localises to the cytoplasm. It catalyses the reaction RNA(n+1) + phosphate = RNA(n) + a ribonucleoside 5'-diphosphate. Involved in mRNA degradation. Catalyzes the phosphorolysis of single-stranded polyribonucleotides processively in the 3'- to 5'-direction. In Bartonella bacilliformis (strain ATCC 35685 / KC583 / Herrer 020/F12,63), this protein is Polyribonucleotide nucleotidyltransferase.